The sequence spans 708 residues: E3 ubiquitin-protein ligase Praja-2 (708 aa).

Over residues 1 to 10 (MSQYTEKEPA) the composition is skewed to basic and acidic residues. Disordered stretches follow at residues 1–30 (MSQYTEKEPAAMDQESGKAVWPKPAGGYQT) and 53–90 (ERSLGRAGDDYEVLELDDVPKENSSGSSPLDQVDSSLP). Position 2 is an N-acetylserine (Ser-2). A compositionally biased stretch (polar residues) spans 74–90 (ENSSGSSPLDQVDSSLP). Ser-196 is subject to Phosphoserine. 3 disordered regions span residues 244 to 342 (GDTE…KQRS), 385 to 411 (TQRETENNQVTPESGATAGRQEVDNPF), and 425 to 495 (DEDS…QTSL). At Thr-246 the chain carries Phosphothreonine. The span at 249–276 (VHQNSQEIQRSSQDEMVSTKQQNNTSQE) shows a compositional bias: polar residues. A phosphoserine mark is found at Ser-253, Ser-309, and Ser-323. Residues 322 to 332 (ISSSQVDQETG) show a composition bias toward polar residues. Over residues 333-342 (FNRHEAKQRS) the composition is skewed to basic and acidic residues. Ser-342 carries the post-translational modification Phosphoserine; by PKA. Thr-389 bears the Phosphothreonine; by PKA mark. A Phosphoserine modification is found at Ser-432. Over residues 467–483 (NEPELQSDSSGPEEENQ) the composition is skewed to acidic residues. The segment covering 484–493 (ELSLQEGEQT) has biased composition (polar residues). The segment at 531 to 708 (DGNNNLEDDS…PSNDSIAEAP (178 aa)) is interaction with PRKAR1A, PRKAR2A and PRKAR2B. Positions 550–570 (WSLFDGFADGLGVAEAISYVD) are mediates interaction with TBC1D31. The RING-type; atypical zinc-finger motif lies at 634 to 675 (CPICCSEYIKDDIATELPCHHFFHKPCVSIWLQKSGTCPVCR). The disordered stretch occupies residues 685–708 (ASAAPSSEPDPDAPPSNDSIAEAP). Low complexity predominate over residues 699–708 (PSNDSIAEAP).

As to quaternary structure, binds ubiquitin-conjugating enzymes (E2s). In vitro, interacts with the ubiquitin-conjugating enzyme, UBE2D2. The phosphorylated form interacts with PRKAR1A, PRKAR2A and PRKAR2B. Binds the catalytic subunits of cAMP-dependent protein kinase. Interacts with MFHAS1. Interacts with TBC1D31; the interaction is direct and recruits PJA2 to centrosomes.

The protein resides in the cytoplasm. It localises to the cell membrane. It is found in the endoplasmic reticulum membrane. The protein localises to the golgi apparatus membrane. Its subcellular location is the synapse. The protein resides in the postsynaptic density. It localises to the cytoskeleton. It is found in the microtubule organizing center. The protein localises to the centrosome. The enzyme catalyses S-ubiquitinyl-[E2 ubiquitin-conjugating enzyme]-L-cysteine + [acceptor protein]-L-lysine = [E2 ubiquitin-conjugating enzyme]-L-cysteine + N(6)-ubiquitinyl-[acceptor protein]-L-lysine.. It participates in protein modification; protein ubiquitination. Its function is as follows. Has E2-dependent E3 ubiquitin-protein ligase activity. Responsible for ubiquitination of cAMP-dependent protein kinase type I and type II-alpha/beta regulatory subunits and for targeting them for proteasomal degradation. Essential for PKA-mediated long-term memory processes. Through the ubiquitination of MFHAS1, positively regulates the TLR2 signaling pathway that leads to the activation of the downstream p38 and JNK MAP kinases and promotes the polarization of macrophages toward the pro-inflammatory M1 phenotype. Plays a role in ciliogenesis by ubiquitinating OFD1. The chain is E3 ubiquitin-protein ligase Praja-2 (PJA2) from Pongo abelii (Sumatran orangutan).